The chain runs to 149 residues: Large ribosomal subunit protein bL9 (149 aa).

This sequence belongs to the bacterial ribosomal protein bL9 family.

Its function is as follows. Binds to the 23S rRNA. This chain is Large ribosomal subunit protein bL9, found in Pasteurella multocida (strain Pm70).